A 216-amino-acid chain; its full sequence is Probable disulfide bond formation protein D (216 aa).

Positions 1–25 are cleaved as a signal peptide; it reads MKSNKLMALGIVFSIAVLIVIGTIA. C65 and C68 are disulfide-bonded.

The protein belongs to the thioredoxin family. DsbA subfamily.

May be required for disulfide bond formation in some proteins. This is Probable disulfide bond formation protein D (bdbD) from Bacillus cereus (strain ATCC 14579 / DSM 31 / CCUG 7414 / JCM 2152 / NBRC 15305 / NCIMB 9373 / NCTC 2599 / NRRL B-3711).